Here is a 440-residue protein sequence, read N- to C-terminus: (S)-N-methylcoclaurine 3'-hydroxylase-like protein (440 aa).

The chain crosses the membrane as a helical; Signal-anchor for type II membrane protein span at residues 2–21; the sequence is EIVTVALIAIVFTTFLYLIV. Residue Cys430 coordinates heme.

This sequence belongs to the cytochrome P450 family. It depends on heme as a cofactor.

It localises to the membrane. Its function is as follows. Involved in the biosynthesis of benzylisoquinoline alkaloids. Probably involved in papaverine biosynthesis since its transcripts are abundant only in cultivars with substantial papaverine accumulation. May catalyze the 3'-hydroxylation of (S)-coclaurine. In Papaver somniferum (Opium poppy), this protein is (S)-N-methylcoclaurine 3'-hydroxylase-like protein.